The sequence spans 336 residues: SCP domain-containing protein 1 (336 aa).

Residues 1-18 (MEFKLLLVLCFNIGLICS) form the signal peptide. An N-linked (GlcNAc...) asparagine glycan is attached at asparagine 47. Residues 73-85 (QGGNTAPSSSLPG) are compositionally biased toward polar residues. The segment at 73–94 (QGGNTAPSSSLPGVSSMPMPSA) is disordered. The 118-residue stretch at 175-292 (LEEHNKFRSD…YCGDMSFIAC (118 aa)) folds into the SCP domain. Asparagine 213 and asparagine 257 each carry an N-linked (GlcNAc...) asparagine glycan.

In terms of tissue distribution, component of the acid-insoluble and acid-soluble organic matrix of calcified layers of the shell (at protein level).

It is found in the secreted. In Lottia gigantea (Giant owl limpet), this protein is SCP domain-containing protein 1.